The primary structure comprises 295 residues: MIKYYNRKNKDYDIEKVAGEKYLNWTYSSPIGMNLLEVFIKKKIFSKIYGFYCDRRLSQKKINKFINDFQIDMSLSENQLSNFKCFNDFFTRKLKKEARPIKTDKNLLISPGDGKLLAYENLNLNSVTEVKGINYSFYELINNDSLAKEYNNGTCLVLRLCPTDYHRFHFIDNGICENTIKLNGFYYSVNPIALSKIPSVFCKNKREYSIFHSENFGDIIFMEVGATCVGSIIQTYKPNTKVLKGDEKGYFKFGGSTVILFFKKNTIKIDDDILSQSKLGYETSVIMGEPIGNKK.

Residues Asp-113, His-169, and Ser-256 each act as charge relay system; for autoendoproteolytic cleavage activity in the active site. Residue Ser-256 is the Schiff-base intermediate with substrate; via pyruvic acid; for decarboxylase activity of the active site. Residue Ser-256 is modified to Pyruvic acid (Ser); by autocatalysis.

The protein belongs to the phosphatidylserine decarboxylase family. PSD-B subfamily. Prokaryotic type II sub-subfamily. As to quaternary structure, heterodimer of a large membrane-associated beta subunit and a small pyruvoyl-containing alpha subunit. The cofactor is pyruvate. Is synthesized initially as an inactive proenzyme. Formation of the active enzyme involves a self-maturation process in which the active site pyruvoyl group is generated from an internal serine residue via an autocatalytic post-translational modification. Two non-identical subunits are generated from the proenzyme in this reaction, and the pyruvate is formed at the N-terminus of the alpha chain, which is derived from the carboxyl end of the proenzyme. The autoendoproteolytic cleavage occurs by a canonical serine protease mechanism, in which the side chain hydroxyl group of the serine supplies its oxygen atom to form the C-terminus of the beta chain, while the remainder of the serine residue undergoes an oxidative deamination to produce ammonia and the pyruvoyl prosthetic group on the alpha chain. During this reaction, the Ser that is part of the protease active site of the proenzyme becomes the pyruvoyl prosthetic group, which constitutes an essential element of the active site of the mature decarboxylase.

Its subcellular location is the cell membrane. The catalysed reaction is a 1,2-diacyl-sn-glycero-3-phospho-L-serine + H(+) = a 1,2-diacyl-sn-glycero-3-phosphoethanolamine + CO2. Its pathway is phospholipid metabolism; phosphatidylethanolamine biosynthesis; phosphatidylethanolamine from CDP-diacylglycerol: step 2/2. Catalyzes the formation of phosphatidylethanolamine (PtdEtn) from phosphatidylserine (PtdSer). In Clostridium botulinum (strain Langeland / NCTC 10281 / Type F), this protein is Phosphatidylserine decarboxylase proenzyme.